A 382-amino-acid polypeptide reads, in one-letter code: Fimbrial usher domain-containing protein YdeT (382 aa).

The protein is Fimbrial usher domain-containing protein YdeT (ydeT) of Escherichia coli (strain K12).